The chain runs to 489 residues: Ketol-acid reductoisomerase (NADP(+)) (489 aa).

One can recognise a KARI N-terminal Rossmann domain in the interval 17–208 (LGVCEFMEQS…GGHKAGVLRS (192 aa)). Residues 45–48 (CGAQ), arginine 68, arginine 76, serine 78, and 108–110 (DKQ) contribute to the NADP(+) site. Histidine 132 is a catalytic residue. Glycine 158 serves as a coordination point for NADP(+). KARI C-terminal knotted domains follow at residues 209-344 (SFVA…KTAP) and 345-485 (QEAP…MTAM). Residues aspartate 217, glutamate 221, glutamate 389, and glutamate 393 each contribute to the Mg(2+) site. Serine 414 is a binding site for substrate.

It belongs to the ketol-acid reductoisomerase family. Mg(2+) serves as cofactor.

It carries out the reaction (2R)-2,3-dihydroxy-3-methylbutanoate + NADP(+) = (2S)-2-acetolactate + NADPH + H(+). It catalyses the reaction (2R,3R)-2,3-dihydroxy-3-methylpentanoate + NADP(+) = (S)-2-ethyl-2-hydroxy-3-oxobutanoate + NADPH + H(+). It participates in amino-acid biosynthesis; L-isoleucine biosynthesis; L-isoleucine from 2-oxobutanoate: step 2/4. It functions in the pathway amino-acid biosynthesis; L-valine biosynthesis; L-valine from pyruvate: step 2/4. Functionally, involved in the biosynthesis of branched-chain amino acids (BCAA). Catalyzes an alkyl-migration followed by a ketol-acid reduction of (S)-2-acetolactate (S2AL) to yield (R)-2,3-dihydroxy-isovalerate. In the isomerase reaction, S2AL is rearranged via a Mg-dependent methyl migration to produce 3-hydroxy-3-methyl-2-ketobutyrate (HMKB). In the reductase reaction, this 2-ketoacid undergoes a metal-dependent reduction by NADPH to yield (R)-2,3-dihydroxy-isovalerate. This Flavobacterium johnsoniae (strain ATCC 17061 / DSM 2064 / JCM 8514 / BCRC 14874 / CCUG 350202 / NBRC 14942 / NCIMB 11054 / UW101) (Cytophaga johnsonae) protein is Ketol-acid reductoisomerase (NADP(+)).